The sequence spans 593 residues: MTSAVVDSGGTILELSSNGVENQEESEKVSEYPAVIVEPVPSARLEQGYAAQVLVYDDETYMMQDVAEEQEVETENVETVEASVHSSNAHCTDKTIEAAEALLHMESPTCLRDSRSPVEVFVPPCVSTPEFIHAAMRPDVITETVVEVSTEESEPMDTSPIPTSPDSHEPMKKKKVGRKPKTQQSPISNGSPELGIKKKPREGKGNTTYLWEFLLDLLQDKNTCPRYIKWTQREKGIFKLVDSKAVSKLWGKHKNKPDMNYETMGRALRYYYQRGILAKVEGQRLVYQFKDMPKNIVVIDDDKSETCNEDLAGTTDEKSLERVSLSAESLLKAASSVRSGKNSSPINCSRAEKGVARVVNITSPGHDASSRSPTTTASVSATAAPRTVRVAMQVPVVMTSLGQKISTVAVQSVNAGAPLITSTSPTTATSPKVVIQTIPTVMPASTENGDKITMQPAKIITIPATQLAQCQLQTKSNLTGSGSINIVGTPLAVRALTPVSIAHGTPVMRLSMPTQQASGQTPPRVISAVIKGPEVKSEAVAKKQEHDVKTLQLVEEKPADGNKTVTHVVVVSAPSAIALPVTMKTEGLVTCEK.

Ser107 is subject to Phosphoserine. The interval 146–201 (VEVSTEESEPMDTSPIPTSPDSHEPMKKKKVGRKPKTQQSPISNGSPELGIKKKPR) is disordered. A compositionally biased stretch (basic residues) spans 171 to 181 (MKKKKVGRKPK). Thr182 is modified (phosphothreonine). Polar residues predominate over residues 182 to 191 (TQQSPISNGS). Residues Ser185 and Ser191 each carry the phosphoserine modification. Residues 208-290 (TYLWEFLLDL…EGQRLVYQFK (83 aa)) constitute a DNA-binding region (ETS). Phosphoserine occurs at positions 363 and 372. Thr376 carries the phosphothreonine modification. The residue at position 430 (Ser430) is a Phosphoserine. Arg494 carries the post-translational modification Omega-N-methylarginine. Thr521 is subject to Phosphothreonine. Lys536 participates in a covalent cross-link: Glycyl lysine isopeptide (Lys-Gly) (interchain with G-Cter in SUMO2).

Belongs to the ETS family. Interacts with the LIM domains of LMO2. Interacts via its N-terminal region with RUNX1. As to expression, expressed in all fetal and adult tissues examined. Among fetal tissues, highest levels of expression detected in heart, lung, liver and kidney, and lower levels in brain. Among adult tissues, highest levels of expression detected in heart, placenta, lung, skeletal muscle, spleen, thymus, testis and ovary. Moderate expression in prostate, small intestine, kidney, liver and pancreas, and weak expression in colon, brain and peripheral blood lymphocytes.

It is found in the nucleus. Functionally, isoform 1 transcriptionally activates the LYN and BLK promoters and acts synergistically with RUNX1 to transactivate the BLK promoter. In terms of biological role, isoform 2 may function in repression of RUNX1-mediated transactivation. The chain is ETS-related transcription factor Elf-2 from Homo sapiens (Human).